A 435-amino-acid chain; its full sequence is Nuclear hormone receptor family member nhr-14 (435 aa).

A DNA-binding region (nuclear receptor) is located at residues 17–92 (ADFCVVCGDK…DGMKPEAIQN (76 aa)). 2 NR C4-type zinc fingers span residues 20 to 40 (CVVC…CNGC) and 56 to 80 (CRFN…FQKC). Positions 91–126 (QNERDRIGSTKRRKRSGANSENNSDSEGTPSPKIEV) are disordered. Polar residues predominate over residues 107-119 (GANSENNSDSEGT). The NR LBD domain maps to 131–355 (VSRKLIEMLL…KRDTISPKIE (225 aa)).

Belongs to the nuclear hormone receptor family. Expressed in intestine and head neurons in young adults.

It is found in the nucleus. Functionally, orphan nuclear receptor. Transcriptional repressor of intestinal metal transporter smf-3 and genes of the innate immune response. Inhibits nuclear localization of transcription factor pqm-1; in response to pathogen stress, may facilitate translocation of pqm-1, leading to transcriptional activation of genes involved in innate immunity and iron uptake. This is Nuclear hormone receptor family member nhr-14 (nhr-14) from Caenorhabditis elegans.